Reading from the N-terminus, the 270-residue chain is 2-heptyl-3-hydroxy-4-quinolone dioxygenase AqdC2 (270 aa).

The AB hydrolase-1 domain occupies 25–156; sequence PALVLLTGWG…KSARAGLAKS (132 aa). Substrate is bound at residue H99. Catalysis depends on H248, which acts as the Proton donor/acceptor.

It belongs to the AB hydrolase superfamily.

The enzyme catalyses 2-heptyl-3-hydroxy-4(1H)-quinolone + O2 = N-octanoylanthranilate + CO + H(+). Its function is as follows. Involved in the degradation of the Pseudomonas aeruginosa quorum sensing signal molecules HHQ (2-heptyl-4-quinolone) and PQS (2-heptyl-3-hydroxy-4-quinolone) to anthranilic acid. Catalyzes the cleavage of PQS to form N-octanoylanthranilic acid and carbon monoxide. This Rhodococcus erythropolis (Arthrobacter picolinophilus) protein is 2-heptyl-3-hydroxy-4-quinolone dioxygenase AqdC2.